We begin with the raw amino-acid sequence, 416 residues long: Protein P47 (416 aa).

This sequence belongs to the TULIP P47 family. Part of a crude toxin extract that includes BoNTA2/NTNH, P47, OrfX2 and OrfX3; OrfX1 was not detected.

Part of a botulinum neurotoxin type A2 (BoNT) locus; may be part of a progenitor toxin complex required to protect BoNT during its passage through the host gastrointestinal tract. The protein is Protein P47 of Clostridium botulinum (strain Kyoto / Type A2).